A 450-amino-acid chain; its full sequence is 23S rRNA (uracil(1939)-C(5))-methyltransferase RlmD (450 aa).

4 residues coordinate [4Fe-4S] cluster: Cys81, Cys87, Cys90, and Cys173. S-adenosyl-L-methionine contacts are provided by Gln276, Phe305, Asn310, Glu326, Asp353, and Asp372. The active-site Nucleophile is Cys402.

This sequence belongs to the class I-like SAM-binding methyltransferase superfamily. RNA M5U methyltransferase family. RlmD subfamily.

It catalyses the reaction uridine(1939) in 23S rRNA + S-adenosyl-L-methionine = 5-methyluridine(1939) in 23S rRNA + S-adenosyl-L-homocysteine + H(+). Functionally, catalyzes the formation of 5-methyl-uridine at position 1939 (m5U1939) in 23S rRNA. This is 23S rRNA (uracil(1939)-C(5))-methyltransferase RlmD from Idiomarina loihiensis (strain ATCC BAA-735 / DSM 15497 / L2-TR).